A 72-amino-acid chain; its full sequence is Protein kish-A (72 aa).

The signal sequence occupies residues 1-26; sequence MSAIFNFQSLLIVILLLICTCAYLRA. The Extracellular portion of the chain corresponds to 27-53; sequence LVPNLLDKNKTGILGIFWKCARIGERK. An N-linked (GlcNAc...) asparagine glycan is attached at Asn-35. A helical membrane pass occupies residues 54–71; the sequence is SPYVAVCCVVMAFSILFM. Residue Gln-72 is a topological domain, cytoplasmic.

The protein belongs to the KISH family.

The protein resides in the golgi apparatus membrane. Involved in the early part of the secretory pathway. The polypeptide is Protein kish-A (tmem167a) (Xenopus tropicalis (Western clawed frog)).